Here is a 141-residue protein sequence, read N- to C-terminus: Protein E6 (141 aa).

Zinc fingers lie at residues 27 to 64 (CRFC…CSSC) and 101 to 137 (CKFC…CRHC).

Belongs to the papillomaviridae E6 protein family. In terms of assembly, forms homodimers. Interacts with ubiquitin-protein ligase UBE3A/E6-AP; this interaction stimulates UBE3A ubiquitin activity. Interacts with host BAK1.

It localises to the host cytoplasm. It is found in the host nucleus. Functionally, plays a major role in the induction and maintenance of cellular transformation. E6 associates with host UBE3A/E6-AP ubiquitin-protein ligase and modulates its activity. Protects host keratinocytes from apoptosis by mediating the degradation of host BAK1. May also inhibit host immune response. In Human papillomavirus 15, this protein is Protein E6.